A 207-amino-acid chain; its full sequence is Ribonuclease HII (207 aa).

The region spanning 12 to 201 (DLVAGVDEVG…VRAAWEVREG (190 aa)) is the RNase H type-2 domain. D18, E19, and D110 together coordinate a divalent metal cation.

It belongs to the RNase HII family. Requires Mn(2+) as cofactor. It depends on Mg(2+) as a cofactor.

The protein localises to the cytoplasm. It catalyses the reaction Endonucleolytic cleavage to 5'-phosphomonoester.. Functionally, endonuclease that specifically degrades the RNA of RNA-DNA hybrids. This Pseudomonas putida (strain ATCC 700007 / DSM 6899 / JCM 31910 / BCRC 17059 / LMG 24140 / F1) protein is Ribonuclease HII.